The chain runs to 158 residues: Single-stranded DNA-binding protein 2 (158 aa).

In terms of domain architecture, SSB spans 1-107 (MNETIVCVVG…IDALAVGHDL (107 aa)). Residues 109–158 (RGTSAFRRPSAKDGEAGVSPAARPEPNWETEPGSQPSVEHQPQPEPAGVT) are disordered.

Homotetramer.

This is Single-stranded DNA-binding protein 2 (ssb2) from Streptomyces avermitilis (strain ATCC 31267 / DSM 46492 / JCM 5070 / NBRC 14893 / NCIMB 12804 / NRRL 8165 / MA-4680).